The chain runs to 100 residues: Large ribosomal subunit protein uL23 (100 aa).

It belongs to the universal ribosomal protein uL23 family. As to quaternary structure, part of the 50S ribosomal subunit. Contacts protein L29, and trigger factor when it is bound to the ribosome.

One of the early assembly proteins it binds 23S rRNA. One of the proteins that surrounds the polypeptide exit tunnel on the outside of the ribosome. Forms the main docking site for trigger factor binding to the ribosome. The protein is Large ribosomal subunit protein uL23 of Colwellia psychrerythraea (strain 34H / ATCC BAA-681) (Vibrio psychroerythus).